Consider the following 607-residue polypeptide: Cytosolic Fe-S cluster assembly factor NAR1 (607 aa).

C20, C82, C85, C88, C204, and C259 together coordinate [4Fe-4S] cluster. Residues 430–476 are disordered; that stretch reads KPNTGKSTNTTTTTTKSKVNPLAARRRARIANNRGKPETKSTSEVNS. Low complexity predominate over residues 432–447; it reads NTGKSTNTTTTTTKSK. Residues C496 and C500 each contribute to the [4Fe-4S] cluster site.

It belongs to the NARF family.

In terms of biological role, component of the cytosolic Fe/S protein assembly machinery. Required for maturation of extramitochondrial Fe/S proteins. May play a role in the transfer of pre-assembled Fe/S clusters to target apoproteins. The chain is Cytosolic Fe-S cluster assembly factor NAR1 (NAR1) from Candida albicans (strain SC5314 / ATCC MYA-2876) (Yeast).